We begin with the raw amino-acid sequence, 460 residues long: MLKILVPTIMLFLVTWSSPKKWLWPITTTHSLLIALLSLLWFKWNMDMGWDFSNHYLAIDPLSAPLLILTCWLLPLMILASQNHISTEPIIRQRIYITLLISLQTFLIMAFSATELIMFYIMFEATLIPTLIIITRWGNQTERLNAGTYFLFYTLIGSLPLLVALLLMQNDLGSLSMIIIQYPQPLSLSTWADKFWWTACLIAFLVKMPLYGVHLWLPKAHVEAPIAGSMILAAVLLKLGGYGMMRIIVMLNPLTKEMAYPFLILAIWGVIMTSSICLRQTDLKSLIAYSSVSHMGLVAGAIMIQTPWSFAGAITLMIAHGLVSSALFCLANTNYERTHSRTLLLARGIQVMLPLMATWWFIANLANLALPPTPNLMGELLIISSLFNWSSWTILLTGLGVLITASYSLYMFLMTQRGPASQHLLSLNPSYTREHLLLNLHLIPMLLLILKPELIWGWTF.

13 consecutive transmembrane segments (helical) span residues 22 to 42 (WLWP…LLWF), 59 to 79 (IDPL…LMIL), 93 to 113 (QRIY…AFSA), 114 to 134 (TELI…LIII), 148 to 168 (TYFL…LLLM), 195 to 215 (FWWT…GVHL), 225 to 245 (PIAG…YGMM), 258 to 278 (MAYP…SICL), 286 to 306 (LIAY…MIQT), 310 to 330 (FAGA…LFCL), 351 to 371 (VMLP…LALP), 394 to 414 (ILLT…MFLM), and 440 to 460 (LHLI…GWTF).

Belongs to the complex I subunit 4 family.

It is found in the mitochondrion membrane. The catalysed reaction is a ubiquinone + NADH + 5 H(+)(in) = a ubiquinol + NAD(+) + 4 H(+)(out). Functionally, core subunit of the mitochondrial membrane respiratory chain NADH dehydrogenase (Complex I) that is believed to belong to the minimal assembly required for catalysis. Complex I functions in the transfer of electrons from NADH to the respiratory chain. The immediate electron acceptor for the enzyme is believed to be ubiquinone. This is NADH-ubiquinone oxidoreductase chain 4 (MT-ND4) from Squalus acanthias (Spiny dogfish).